The chain runs to 215 residues: UPF0126 membrane protein DR_2368 (215 aa).

6 helical membrane-spanning segments follow: residues 15-35 (LHWL…LLGV), 39-59 (FDLF…GAIR), 75-95 (TYLW…ERLA), 101-121 (LSLF…LGAI), 123-143 (IGLG…GGGI), and 162-182 (LYAT…PHFT).

This sequence belongs to the UPF0126 family.

It is found in the cell membrane. This chain is UPF0126 membrane protein DR_2368, found in Deinococcus radiodurans (strain ATCC 13939 / DSM 20539 / JCM 16871 / CCUG 27074 / LMG 4051 / NBRC 15346 / NCIMB 9279 / VKM B-1422 / R1).